We begin with the raw amino-acid sequence, 1173 residues long: MVASLLPSRFRGRESMNQQHPLRSGNRALTSTLQFLSKTACLHPIHTVCTIAILASTTYVGLLKDSFFHGPANVDKAEWGSLVEGSRSLITGPQNGWKWQSFDGDADVLGDFNHQALMTLVFPGSYGVASQAASPFLAPLPVNLSVIDLPSTSSPLTAYSKDKVFAFSVEYSSAPELVAAVQEIPNNSADLKLQETQLIEMERQMWIMKAARAHTKRSLAQWVHDTWTESLDLIKSAQTLDVVVMVLGYISMHLTFVSLFLSMKKLGSKVWLATSVLLSSTFAFLLGLDVAIRLGVPMSMRLLSEGLPFLVVIVGFEKSITLTRAVLSYAVQHRKPQKIQSDQGSVTAIAESTINYAVRSAIREKGYNIVCHYVVEILLLVIGAVLGIQGGLQHFCVLAALILFFDCLLLFTFYTAILSIKLEVNRLKRHINMRYALEDEGLSQRTAESVATSNDAQDSARTYLFGNDMKGSSVPKFKFWMVVGFLIVNLVNIGSTLFQASSSGSLSSISSWTESLSGSAIKPPLEPFKVAGSGLDELLFQARGRGQSTMVTVLAPIKYELEYPSIHRGTSQLHEYGVGGKMVGSLLTSLEDPVLSKWVFVALALSVALNSYLFKAARLGIKDPNLPSHPVDPVELDQAESFNAAQNQTPQIQSSLQAPQTRVFTPTTTDSDSDASLVLIKASLKVTKRAEGKTATSELPVSRTQIELDNLLKQNTISELNDEDVVALSLRGKVPGYALEKSLKDCTRAVKVRRSIISRTPATAELTSMLEHSKLPYENYAWERVLGACCENVIGYMPVPVGVAGPIVIDGKSYFIPMATTEGVLVASASRGSKAINLGGGAVTVLTGDGMTRGPCVKFDVLERAGAAKIWLDSDVGQTVMKEAFNSTSRFARLQSMRTTIAGTHLYIRFKTTTGDAMGMNMISKGVEHALNVMATEAGFSDMNIITLSGNYCTDKKPSALNWIDGRGKGIVAEAIIPANVVRDVLKSDVDSMVQLNISKNLIGSAMAGSVGGFNAQAANLAAAIFIATGQDPAQVVESANCITLMNNLRGSLQISVSMPSIEVGTLGGGTILEPQGAMLDMLGVRGSHPTTPGENARQLARIIGSAVLAGELSLCAALAAGHLVKAHMAHNRSAPASSAPSRSVSPSGGTRTVPVPNNALRPSAAATDRARR.

N-linked (GlcNAc...) asparagine glycosylation is found at Asn-143 and Asn-186. The 180-residue stretch at 241–420 (DVVVMVLGYI…FTFYTAILSI (180 aa)) folds into the SSD domain. 7 helical membrane-spanning segments follow: residues 242–262 (VVVMVLGYISMHLTFVSLFLS), 272–292 (LATSVLLSSTFAFLLGLDVAI), 302–322 (LLSEGLPFLVVIVGFEKSITL), 368–388 (NIVCHYVVEILLLVIGAVLGI), 397–417 (VLAALILFFDCLLLFTFYTAI), 479–499 (FWMVVGFLIVNLVNIGSTLFQ), and 594–614 (VLSKWVFVALALSVALNSYLF). Residues 498–673 (FQASSSGSLS…FTPTTTDSDS (176 aa)) form a linker region. Residues 647 to 666 (NQTPQIQSSLQAPQTRVFTP) are compositionally biased toward polar residues. The interval 647 to 669 (NQTPQIQSSLQAPQTRVFTPTTT) is disordered. Positions 674–1133 (DASLVLIKAS…LVKAHMAHNR (460 aa)) are catalytic. Catalysis depends on Glu-822, which acts as the Charge relay system. The N-linked (GlcNAc...) asparagine glycan is linked to Asn-886. Lys-956 functions as the Charge relay system in the catalytic mechanism. A glycan (N-linked (GlcNAc...) asparagine) is linked at Asn-997. Asp-1032 serves as the catalytic Charge relay system. Residue His-1128 is the Proton donor of the active site. The N-linked (GlcNAc...) asparagine glycan is linked to Asn-1132. The interval 1132 to 1173 (NRSAPASSAPSRSVSPSGGTRTVPVPNNALRPSAAATDRARR) is disordered. Low complexity predominate over residues 1133 to 1148 (RSAPASSAPSRSVSPS).

It belongs to the HMG-CoA reductase family.

Its subcellular location is the endoplasmic reticulum membrane. It catalyses the reaction (R)-mevalonate + 2 NADP(+) + CoA = (3S)-3-hydroxy-3-methylglutaryl-CoA + 2 NADPH + 2 H(+). The protein operates within polyketide biosynthesis. Its function is as follows. HMG-CoA reductase; part of the gene cluster that mediates the biosynthesis of compactin, also known as mevastatin or ML-236B, and which acts as a potent competitive inhibitor of HMG-CoA reductase. Compactin biosynthesis is performed in two stages. The first stage is catalyzed by the nonaketide synthase mlcA, which belongs to type I polyketide synthases and catalyzes the iterative nine-step formation of the polyketide. This PKS stage is completed by the action of dehydrogenase mlcG, which catalyzes the NADPH-dependent reduction of the unsaturated tetra-, penta- and heptaketide intermediates that arise during the mlcA-mediated biosynthesis of the nonaketide chain and leads to dihydro-ML-236C carboxylate. Covalently bound dihydro-ML-236C carboxylate is released from mlcA by the mlcF esterase. Conversion of dihydro-ML-236C carboxylate into ML-236A carboxylate is subsequently performed with the participation of molecular oxygen and P450 monoogygenase mlcC. Finally, mlcH performs the conversion of ML-236A carboxylate to ML-236B/compactin carboxylate through the addition of the side-chain diketide moiety produced by the diketide synthase mlcB. HMG-CoA reductase mlcD may act as a down-regulator of compactin production and is involved in conferring resistance to ML-236B/compactin. This Penicillium citrinum protein is 3-hydroxy-3-methylglutaryl coenzyme A reductase mlcD.